The following is a 465-amino-acid chain: Cystathionine beta-lyase (465 aa).

At K213 the chain carries N6-(pyridoxal phosphate)lysine.

This sequence belongs to the trans-sulfuration enzymes family. Pyridoxal 5'-phosphate is required as a cofactor.

The protein resides in the cytoplasm. It localises to the nucleus. The catalysed reaction is L,L-cystathionine + H2O = L-homocysteine + pyruvate + NH4(+). It carries out the reaction an S-substituted L-cysteine + H2O = a thiol + pyruvate + NH4(+). The protein operates within amino-acid biosynthesis; L-methionine biosynthesis via de novo pathway; L-homocysteine from L-cystathionine: step 1/1. The polypeptide is Cystathionine beta-lyase (STR3) (Saccharomyces cerevisiae (strain ATCC 204508 / S288c) (Baker's yeast)).